The sequence spans 436 residues: Zinc finger protein 101 (436 aa).

The KRAB domain occupies 4–82 (VAFEDVAVNF…RKEGNEHRET (79 aa)). A C2H2-type 1 zinc finger spans residues 102 to 124 (CKCSVCGKVFLRHSFLDRHMRAH). The segment covering 128–141 (KRSECGGEWRETPR) has biased composition (basic and acidic residues). A disordered region spans residues 128–164 (KRSECGGEWRETPRKQKQHGKASISPSSGARRTVTPT). The segment covering 151 to 163 (ISPSSGARRTVTP) has biased composition (polar residues). The segment at 169–191 (YECKVCGKAFNSPNLFQIHQRTH) adopts a C2H2-type 2 zinc-finger fold. A C2H2-type 3; degenerate zinc finger spans residues 197 to 219 (YKCREIVRAFTVSSFFRKHGKMH). C2H2-type zinc fingers lie at residues 225–247 (YECK…VRTH), 253–276 (YKCK…IRSH), 282–304 (HQCQ…ERTH), 310–332 (YECQ…ERAH), 338–360 (YECN…KKTH), 366–388 (YECT…EMTH), and 394–416 (FDCK…ERTH).

It belongs to the krueppel C2H2-type zinc-finger protein family. As to expression, expressed in a variety of adult and fetal tissues.

Its subcellular location is the nucleus. Its function is as follows. May be involved in transcriptional regulation. This chain is Zinc finger protein 101 (ZNF101), found in Homo sapiens (Human).